Consider the following 210-residue polypeptide: 7-carboxy-7-deazaguanine synthase (210 aa).

Substrate-binding positions include 12–14 and arginine 27; that span reads LQG. A Radical SAM core domain is found at 18-210; that stretch reads QAGRAAVFCR…LQTHKYIGIP (193 aa). [4Fe-4S] cluster is bound by residues cysteine 31, cysteine 46, and cysteine 49. Threonine 51 lines the Mg(2+) pocket. Residue threonine 90 coordinates substrate. Residues glycine 92, 133–135, and 173–176 each bind S-adenosyl-L-methionine; these read SPK and QPMD. Proline 210 lines the substrate pocket.

The protein belongs to the radical SAM superfamily. 7-carboxy-7-deazaguanine synthase family. In terms of assembly, homodimer. [4Fe-4S] cluster serves as cofactor. It depends on S-adenosyl-L-methionine as a cofactor. Mg(2+) is required as a cofactor.

It carries out the reaction 6-carboxy-5,6,7,8-tetrahydropterin + H(+) = 7-carboxy-7-deazaguanine + NH4(+). Its pathway is purine metabolism; 7-cyano-7-deazaguanine biosynthesis. In terms of biological role, catalyzes the complex heterocyclic radical-mediated conversion of 6-carboxy-5,6,7,8-tetrahydropterin (CPH4) to 7-carboxy-7-deazaguanine (CDG), a step common to the biosynthetic pathways of all 7-deazapurine-containing compounds. This Bordetella pertussis (strain Tohama I / ATCC BAA-589 / NCTC 13251) protein is 7-carboxy-7-deazaguanine synthase.